The following is a 281-amino-acid chain: Ribulose-5-phosphate-3-epimerase, chloroplastic (281 aa).

The transit peptide at 1 to 45 (MSTSAASLCCSSTQVNGFGLRPERSLLYQPTSFSFSRRRTHGIVK) directs the protein to the chloroplast. Position 63 (serine 63) interacts with substrate. Residues histidine 88, aspartate 90, and histidine 121 each coordinate a divalent metal cation. The active-site Proton acceptor is the aspartate 90. Substrate contacts are provided by residues histidine 121, 199 to 202 (GFGG), 232 to 234 (DGG), and 254 to 256 (GSA). Aspartate 232 is a binding site for a divalent metal cation. Aspartate 232 functions as the Proton donor in the catalytic mechanism.

Belongs to the ribulose-phosphate 3-epimerase family. Homooctamer. It depends on Co(2+) as a cofactor. Fe(2+) serves as cofactor. Requires Mn(2+) as cofactor. The cofactor is Zn(2+). As to expression, present in roots, seeds and flowers. Accumulates in nematode feeding sites (NFS).

It is found in the plastid. The protein localises to the chloroplast thylakoid membrane. It carries out the reaction D-ribulose 5-phosphate = D-xylulose 5-phosphate. It functions in the pathway carbohydrate biosynthesis; Calvin cycle. Essential protein required during embryogenesis. Catalyzes the reversible epimerization of D-ribulose 5-phosphate to D-xylulose 5-phosphate. Essential for the early steps of nematode feeding sites (NFS, multinucleated root cells) formation induced by the root-knot nematodes Heterodera schachtii, Meloidogyne incognita, M.javanica and M.hapla. In Arabidopsis thaliana (Mouse-ear cress), this protein is Ribulose-5-phosphate-3-epimerase, chloroplastic.